The primary structure comprises 289 residues: tRNA pseudouridine synthase B (289 aa).

Asp38 acts as the Nucleophile in catalysis.

The protein belongs to the pseudouridine synthase TruB family. Type 1 subfamily.

It catalyses the reaction uridine(55) in tRNA = pseudouridine(55) in tRNA. In terms of biological role, responsible for synthesis of pseudouridine from uracil-55 in the psi GC loop of transfer RNAs. In Clostridium kluyveri (strain ATCC 8527 / DSM 555 / NBRC 12016 / NCIMB 10680 / K1), this protein is tRNA pseudouridine synthase B.